The primary structure comprises 359 residues: Guanine nucleotide-binding protein subunit alpha-11 (359 aa).

S-palmitoyl cysteine attachment occurs at residues Cys9 and Cys10. Positions Arg38–Val359 constitute a G-alpha domain. The segment at Lys41–Thr54 is G1 motif. GTP-binding positions include Gly46–Ser53 and Leu180–Arg183. Residue Ser53 coordinates Mg(2+). The segment at Asp178–Thr186 is G2 motif. Position 186 (Thr186) interacts with Mg(2+). A G3 motif region spans residues Phe201–Arg210. A G4 motif region spans residues Ile270–Asp277. GTP is bound by residues Asn274–Asp277 and Ala331. Positions Thr329–Thr334 are G5 motif.

The protein belongs to the G-alpha family. G(q) subfamily. In terms of assembly, g proteins are composed of 3 units; alpha, beta and gamma. The alpha chain contains the guanine nucleotide binding site.

It localises to the cell membrane. It is found in the cytoplasm. The enzyme catalyses GTP + H2O = GDP + phosphate + H(+). In terms of biological role, guanine nucleotide-binding proteins (G proteins) function as transducers downstream of G protein-coupled receptors (GPCRs) in numerous signaling cascades. The alpha chain contains the guanine nucleotide binding site and alternates between an active, GTP-bound state and an inactive, GDP-bound state. Signaling by an activated GPCR promotes GDP release and GTP binding. The alpha subunit has a low GTPase activity that converts bound GTP to GDP, thereby terminating the signal. Both GDP release and GTP hydrolysis are modulated by numerous regulatory proteins. Signaling is mediated via phospholipase C-beta-dependent inositol lipid hydrolysis for signal propagation: activates phospholipase C-beta: following GPCR activation, GNA11 activates PLC-beta (PLCB1, PLCB2, PLCB3 or PLCB4), leading to production of diacylglycerol (DAG) and inositol 1,4,5-trisphosphate (IP3). The sequence is that of Guanine nucleotide-binding protein subunit alpha-11 (gna11) from Xenopus laevis (African clawed frog).